Here is a 432-residue protein sequence, read N- to C-terminus: D-amino acid dehydrogenase (432 aa).

3-17 (VVILGSGVVGVASAW) serves as a coordination point for FAD.

The protein belongs to the DadA oxidoreductase family. FAD serves as cofactor.

The enzyme catalyses a D-alpha-amino acid + A + H2O = a 2-oxocarboxylate + AH2 + NH4(+). The protein operates within amino-acid degradation; D-alanine degradation; NH(3) and pyruvate from D-alanine: step 1/1. Functionally, oxidative deamination of D-amino acids. The protein is D-amino acid dehydrogenase of Shigella boydii serotype 18 (strain CDC 3083-94 / BS512).